A 432-amino-acid chain; its full sequence is Adenosylhomocysteinase (432 aa).

At Ser2 the chain carries N-acetylserine. Residues Thr57, Asp131, and Glu156 each contribute to the substrate site. Ser183 bears the Phosphoserine mark. Residues 183–350 (SVTKSKFDNL…EGRLVNLGCA (168 aa)) form an NAD binding region. 2 residues coordinate substrate: Lys186 and Asp190. Residue Lys186 is modified to N6-(2-hydroxyisobutyryl)lysine. Tyr193 is modified (phosphotyrosine).

This sequence belongs to the adenosylhomocysteinase family. Homotetramer. Interaction with AHCYL1. NAD(+) is required as a cofactor.

It localises to the cytoplasm. Its subcellular location is the melanosome. The protein resides in the nucleus. The protein localises to the endoplasmic reticulum. The catalysed reaction is S-adenosyl-L-homocysteine + H2O = L-homocysteine + adenosine. Its pathway is amino-acid biosynthesis; L-homocysteine biosynthesis; L-homocysteine from S-adenosyl-L-homocysteine: step 1/1. Catalyzes the hydrolysis of S-adenosyl-L-homocysteine to form adenosine and homocysteine. Binds copper ions. This is Adenosylhomocysteinase (AHCY) from Bos taurus (Bovine).